The chain runs to 154 residues: 6,7-dimethyl-8-ribityllumazine synthase (154 aa).

5-amino-6-(D-ribitylamino)uracil is bound by residues Phe22, 56–58 (AFE), and 80–82 (TVI). 85–86 (AT) contacts (2S)-2-hydroxy-3-oxobutyl phosphate. His88 serves as the catalytic Proton donor. Residue Phe113 participates in 5-amino-6-(D-ribitylamino)uracil binding. Arg127 serves as a coordination point for (2S)-2-hydroxy-3-oxobutyl phosphate.

It belongs to the DMRL synthase family. Forms an icosahedral capsid composed of 60 subunits, arranged as a dodecamer of pentamers.

It catalyses the reaction (2S)-2-hydroxy-3-oxobutyl phosphate + 5-amino-6-(D-ribitylamino)uracil = 6,7-dimethyl-8-(1-D-ribityl)lumazine + phosphate + 2 H2O + H(+). Its pathway is cofactor biosynthesis; riboflavin biosynthesis; riboflavin from 2-hydroxy-3-oxobutyl phosphate and 5-amino-6-(D-ribitylamino)uracil: step 1/2. Catalyzes the formation of 6,7-dimethyl-8-ribityllumazine by condensation of 5-amino-6-(D-ribitylamino)uracil with 3,4-dihydroxy-2-butanone 4-phosphate. This is the penultimate step in the biosynthesis of riboflavin. In Bacillus pumilus (strain SAFR-032), this protein is 6,7-dimethyl-8-ribityllumazine synthase.